The chain runs to 334 residues: Small ribosomal subunit protein RACK1z (334 aa).

7 WD repeats span residues 16-47 (GHNDVVTAIATPIDNSPFIVSSSRDKSLLVWD), 73-103 (GHSHFVQDVVLSSDGQFALSGSWDGELRLWD), 115-145 (GHDKDVLSVAFSVDNRQIVSASRDRTIKLWN), 163-195 (GHNGWVSCVRFSPNTFQPTIVSGSWDRTVKVWN), 207-237 (GHGGYVNAVAVSPDGSLCASGGKDGVTLLWD), 248-277 (DAGSIIHSLCFSPNRYWLCAATQDSIKIWD), and 296-326 (NQMLYCTSLNWSADGSTLYAGYTDGTIRIYK).

The protein belongs to the WD repeat G protein beta family. Ribosomal protein RACK1 subfamily. In terms of assembly, interacts with RAC1, RAC3, RAC6, RAR1, SGT1 and RBOHB. Homodimer and heterodimer with RACK1B. Widely expressed.

The protein localises to the cytoplasm. The protein resides in the cell membrane. Its function is as follows. Component of the RACK1 regulatory proteins that functions in innate immunity by interacting with multiple proteins in the RAC1 immune complex. Acts as a positive regulator of reactive oxygen species (ROS) production and is required for resistance against rice blast (M.grisea) infection. In Oryza sativa subsp. japonica (Rice), this protein is Small ribosomal subunit protein RACK1z (RACK1A).